Reading from the N-terminus, the 50-residue chain is Protein PndA (50 aa).

The helical transmembrane segment at 5–25 (TFLMMLIVICVTILCFVWMVR) threads the bilayer.

The protein belongs to the Hok/Gef family.

The protein resides in the cell inner membrane. Functionally, toxic component of a type I toxin-antitoxin (TA) system. When expressed is involved in cellular Mg(2+) release and degradation of stable RNA. The sequence is that of Protein PndA (pndA) from Escherichia coli.